The sequence spans 488 residues: Glutamyl-tRNA(Gln) amidotransferase subunit A (488 aa).

Catalysis depends on charge relay system residues Lys77 and Ser152. The active-site Acyl-ester intermediate is Ser176.

Belongs to the amidase family. GatA subfamily. As to quaternary structure, heterotrimer of A, B and C subunits.

It carries out the reaction L-glutamyl-tRNA(Gln) + L-glutamine + ATP + H2O = L-glutaminyl-tRNA(Gln) + L-glutamate + ADP + phosphate + H(+). In terms of biological role, allows the formation of correctly charged Gln-tRNA(Gln) through the transamidation of misacylated Glu-tRNA(Gln) in organisms which lack glutaminyl-tRNA synthetase. The reaction takes place in the presence of glutamine and ATP through an activated gamma-phospho-Glu-tRNA(Gln). This Streptococcus pneumoniae serotype 19F (strain G54) protein is Glutamyl-tRNA(Gln) amidotransferase subunit A.